The primary structure comprises 412 residues: Imidazolonepropionase (412 aa).

Positions 73 and 75 each coordinate Fe(3+). Residues His-73 and His-75 each contribute to the Zn(2+) site. 4-imidazolone-5-propanoate contacts are provided by Arg-82, Tyr-145, and His-178. Tyr-145 is an N-formimidoyl-L-glutamate binding site. Fe(3+) is bound at residue His-247. A Zn(2+)-binding site is contributed by His-247. Gln-250 is a 4-imidazolone-5-propanoate binding site. A Fe(3+)-binding site is contributed by Asp-322. Position 322 (Asp-322) interacts with Zn(2+). Residues Asn-324 and Gly-326 each contribute to the N-formimidoyl-L-glutamate site. Residue Ser-327 coordinates 4-imidazolone-5-propanoate.

This sequence belongs to the metallo-dependent hydrolases superfamily. HutI family. The cofactor is Zn(2+). Fe(3+) serves as cofactor.

The protein resides in the cytoplasm. It catalyses the reaction 4-imidazolone-5-propanoate + H2O = N-formimidoyl-L-glutamate. Its pathway is amino-acid degradation; L-histidine degradation into L-glutamate; N-formimidoyl-L-glutamate from L-histidine: step 3/3. Catalyzes the hydrolytic cleavage of the carbon-nitrogen bond in imidazolone-5-propanoate to yield N-formimidoyl-L-glutamate. It is the third step in the universal histidine degradation pathway. The polypeptide is Imidazolonepropionase (Shewanella amazonensis (strain ATCC BAA-1098 / SB2B)).